The sequence spans 571 residues: Mannan endo-1,4-beta-mannosidase B (571 aa).

The first 19 residues, Met-1–Ala-19, serve as a signal peptide directing secretion. The region spanning Val-22–Asn-141 is the CBM6 domain. A GH26 domain is found at Pro-165–Asp-459. Position 286 (Trp-286) interacts with substrate. The Proton donor role is filled by Glu-319. Trp-324 and Tyr-379 together coordinate substrate. Glu-407 acts as the Nucleophile in catalysis. CBM10 domains lie at Glu-491–Gly-527 and Val-534–Ile-571.

Belongs to the glycosyl hydrolase 26 family.

The enzyme catalyses Random hydrolysis of (1-&gt;4)-beta-D-mannosidic linkages in mannans, galactomannans and glucomannans.. This is Mannan endo-1,4-beta-mannosidase B (MANB) from Piromyces sp.